The chain runs to 93 residues: Protein BOLA2 (93 aa).

Cys-29 carries the post-translational modification S-glutathionyl cysteine; transient; alternate. The segment at 72–93 (KAQTPQQWKPPSQDSATLTKDA) is disordered.

This sequence belongs to the bolA/yrbA family. Homodimer. Interacts in vitro with GRXS14, GRXS15, GRXS16 and GRXS17, but not with GRXC5. Interacts in vivo only with GRXS17. Can be either glutathionylated or forming covalent homodimers, depending on the oxidation state.

Its subcellular location is the cytoplasm. The protein localises to the nucleus. Its function is as follows. May act either alone or in interaction with glutaredoxin as a redox-regulated transcriptional regulator, or as a factor regulating Fe-S cluster biogenesis. The GRXS17-BOLA2 heterodimer binds a labile, oxygen sensitive iron-sulfur cluster. The chain is Protein BOLA2 from Arabidopsis thaliana (Mouse-ear cress).